Consider the following 728-residue polypeptide: Putative auxin response factor 20 (728 aa).

Residues 119 to 233 (FFEKQLSPAD…ELLVGVRRAP (115 aa)) constitute a DNA-binding region (TF-B3 1). 2 stretches are compositionally biased toward low complexity: residues 665–689 (PQGS…TTSA) and 700–712 (ASSS…IIPS). The interval 665–728 (PQGSDEEAAA…IVNPRDGSQG (64 aa)) is disordered.

This sequence belongs to the ARF family. Homo and heterodimers.

The protein resides in the nucleus. Functionally, auxin response factors (ARFs) are transcriptional factors that bind specifically to the DNA sequence 5'-TGTCTC-3' found in the auxin-responsive promoter elements (AuxREs). The sequence is that of Putative auxin response factor 20 (ARF20) from Oryza sativa subsp. japonica (Rice).